A 1450-amino-acid chain; its full sequence is Collagen alpha-1(I) chain (1450 aa).

The N-terminal stretch at 1–22 is a signal peptide; sequence MFSFVDNRLLVLLAACVLLVRA. Residues 23–148 constitute a propeptide, N-terminal propeptide; the sequence is LDQEDIESGL…PPGLGGNFAP (126 aa). The VWFC domain occupies 31–90; sequence GLCHQEGTTYSDKDVWKPEPCVICVCDNGNIMCDDVTCGDYPVDCPNAEIPFGECCPVCP. The tract at residues 97-1201 is disordered; sequence YSEQTGVEGP…EPKSHGDGRY (1105 aa). The span at 106–116 shows a compositional bias: basic and acidic residues; sequence PKGEVGPKGDR. The segment covering 130 to 140 has biased composition (pro residues); sequence LPGPPGPPGPP. Glutamine 149 is subject to Pyrrolidone carboxylic acid. Allysine is present on lysine 157. Residues 166-181 show a composition bias toward pro residues; sequence PMGPMGPRGPPGPSGS. A 4-hydroxyproline mark is found at proline 176, proline 182, proline 194, proline 197, proline 212, proline 227, proline 242, and proline 248. Low complexity predominate over residues 182 to 206; it reads PGPQGFQGPSGEPGEPGAAGALGPR. A compositionally biased stretch (basic and acidic residues) spans 215 to 229; that stretch reads NGDDGESGKPGRPGE. Lysine 251 carries the post-translational modification 5-hydroxylysine; alternate. Lysine 251 is a glycosylation site (O-linked (Gal...) hydroxylysine; alternate). Low complexity predominate over residues 266-292; sequence NGPAGPKGEPGNPGENGAPGQAGPRGL. A 4-hydroxyproline mark is found at proline 275, proline 278, proline 284, proline 293, proline 299, proline 314, proline 320, proline 329, proline 332, proline 359, proline 362, proline 374, proline 380, proline 389, proline 395, proline 398, and proline 413. Residues 317 to 331 are compositionally biased toward pro residues; sequence AGPPGPTGPTGPPGF. Positions 352 to 374 are enriched in low complexity; it reads PQGARGEPGAPGPAGAAGPSGNP. Positions 378-387 are enriched in gly residues; it reads GQPGGKGATG. The span at 388-443 shows a compositional bias: low complexity; the sequence is SPGIAGAPGFPGARGAPGPQGPAGAPGPKGNNGEPGAQGNKGEPGAKGEPGPAGVQ. Lysine 416 is subject to 5-hydroxylysine. Residues proline 422, proline 437, proline 446, proline 461, proline 467, proline 476, and proline 482 each carry the 4-hydroxyproline modification. Over residues 471–480 the composition is skewed to gly residues; that stretch reads GERGGPGSRG. A 5-hydroxylysine modification is found at lysine 491. A 4-hydroxyproline mark is found at proline 494, proline 515, proline 521, proline 530, proline 533, proline 551, proline 569, proline 578, proline 590, proline 608, proline 626, proline 632, proline 644, proline 650, proline 656, and proline 668. Composition is skewed to low complexity over residues 568-578 and 586-596; these read FPGPKGAAGEP and VAGPPGATGAP. Residues 637–650 show a composition bias toward low complexity; sequence PAGEAGKPGEQGAP. Residues 669–678 show a composition bias toward gly residues; sequence GERGGQGPAG. Low complexity predominate over residues 679–701; the sequence is AQGPRGSPGSPGNDGAKGEAGAA. A 4-hydroxyproline mark is found at proline 689, proline 704, proline 710, proline 716, and proline 725. Positions 702-711 are enriched in gly residues; that stretch reads GAPGGRGPPG. Lysine 737 carries the post-translational modification 5-hydroxylysine. 4-hydroxyproline occurs at positions 743, 758, 764, 785, 791, 794, 803, 809, 827, 836, and 845. Residues 796–806 show a composition bias toward low complexity; it reads PAGICGPPGAD. Over residues 817–869 the composition is skewed to low complexity; it reads DAGPKGDAGAPGPAGPTGAPGPAGNVGAPGPKGTRGAAGPPGATGFPGAAGRL. Residue lysine 848 is modified to 5-hydroxylysine. 2 positions are modified to 4-hydroxyproline: proline 857 and proline 863. A 3-hydroxyproline modification is found at proline 871. A 4-hydroxyproline mark is found at proline 872, proline 881, proline 884, proline 908, proline 914, proline 923, proline 932, proline 950, proline 962, proline 968, proline 983, proline 989, proline 995, proline 1004, and proline 1010. A compositionally biased stretch (low complexity) spans 917–943; the sequence is SGEKGSPGSDGPAGAPGIPGPQGIAGQ. Over residues 982 to 997 the composition is skewed to pro residues; sequence PPGPSGPPGLGGPPGE. Residue lysine 1019 is modified to 5-hydroxylysine. Pro residues predominate over residues 1028 to 1043; it reads SGPPGAPGAPGAPGPV. Proline 1031, proline 1034, and proline 1037 each carry 4-hydroxyproline. The segment covering 1064–1078 has biased composition (low complexity); that stretch reads AGPSGVRGAPGPAGA. Over residues 1079-1093 the composition is skewed to basic and acidic residues; the sequence is RGDKGEAGEQGERGM. A 5-hydroxylysine modification is found at lysine 1082. Position 1094 is a 5-hydroxylysine; alternate (lysine 1094). An O-linked (Gal...) hydroxylysine; alternate glycan is attached at lysine 1094. A 4-hydroxyproline mark is found at proline 1106 and proline 1109. Pro residues predominate over residues 1120–1129; sequence PSGPAGPRGP. 4-hydroxyproline occurs at positions 1130 and 1145. A compositionally biased stretch (low complexity) spans 1130–1145; it reads PGSSGSTGKDGVNGLP. Proline 1150 is modified (3-hydroxyproline). Proline 1151 is modified (4-hydroxyproline). A compositionally biased stretch (pro residues) spans 1163–1178; the sequence is AGPPGPPGPPGPPGPP. 3-hydroxyproline is present on proline 1165. Position 1166 is a 4-hydroxyproline (proline 1166). A 3-hydroxyproline modification is found at proline 1168. The residue at position 1169 (proline 1169) is a 4-hydroxyproline. Proline 1171 bears the 3-hydroxyproline mark. 4-hydroxyproline is present on residues proline 1172, proline 1175, and proline 1178. The residue at position 1194 (lysine 1194) is an Allysine. The propeptide at 1205 to 1450 is C-terminal propeptide; that stretch reads DDANVVRDRD…GIDIGPVCFL (246 aa). Positions 1215-1450 constitute a Fibrillar collagen NC1 domain; sequence LEVDTTLKSL…GIDIGPVCFL (236 aa). Cystine bridges form between cysteine 1245–cysteine 1277, cysteine 1285–cysteine 1448, and cysteine 1356–cysteine 1401. Ca(2+)-binding residues include aspartate 1263, asparagine 1265, glutamine 1266, cysteine 1268, and aspartate 1271. Asparagine 1351 carries N-linked (GlcNAc...) asparagine glycosylation.

This sequence belongs to the fibrillar collagen family. Trimers of one alpha 2(I) and two alpha 1(I) chains. Contains mostly 4-hydroxyproline. Proline residues at the third position of the tripeptide repeating unit (G-X-Y) are hydroxylated in some or all of the chains. Post-translationally, contains 3-hydroxyproline at a few sites. This modification occurs on the first proline residue in the sequence motif Gly-Pro-Hyp, where Hyp is 4-hydroxyproline. In terms of processing, lysine residues at the third position of the tripeptide repeating unit (G-X-Y) are 5-hydroxylated in some or all of the chains. O-glycosylated on hydroxylated lysine residues. The O-linked glycan consists of a Glc-Gal disaccharide.

Its subcellular location is the secreted. The protein localises to the extracellular space. It is found in the extracellular matrix. Type I collagen is a member of group I collagen (fibrillar forming collagen). The chain is Collagen alpha-1(I) chain (COL1A1) from Cynops pyrrhogaster (Japanese fire-bellied newt).